A 302-amino-acid polypeptide reads, in one-letter code: D-alanine--D-alanine ligase (302 aa).

One can recognise an ATP-grasp domain in the interval 100-295 (KTVFDHHGIL…FNELIAKLIE (196 aa)). 126 to 180 (QDLEPPVFIKPNSGGSSLGMTFARTAEELEKGIETVFSLGDSALVEEYTKGIEVT) lines the ATP pocket. Residues Asp-250, Glu-262, and Asn-264 each coordinate Mg(2+).

Belongs to the D-alanine--D-alanine ligase family. The cofactor is Mg(2+). Requires Mn(2+) as cofactor.

The protein localises to the cytoplasm. It carries out the reaction 2 D-alanine + ATP = D-alanyl-D-alanine + ADP + phosphate + H(+). The protein operates within cell wall biogenesis; peptidoglycan biosynthesis. Cell wall formation. The sequence is that of D-alanine--D-alanine ligase from Maridesulfovibrio salexigens (strain ATCC 14822 / DSM 2638 / NCIMB 8403 / VKM B-1763) (Desulfovibrio salexigens).